Here is a 209-residue protein sequence, read N- to C-terminus: Protein N-terminal glutamine amidohydrolase (209 aa).

Catalysis depends on residues Cys30, His83, and Asp99.

The protein belongs to the NTAQ1 family. In terms of assembly, monomer. In terms of tissue distribution, widely expressed.

Its subcellular location is the cytoplasm. The protein localises to the cytosol. It is found in the nucleus. It carries out the reaction N-terminal L-glutaminyl-[protein] + H2O = N-terminal L-glutamyl-[protein] + NH4(+). Mediates the side-chain deamidation of N-terminal glutamine residues to glutamate, an important step in N-end rule pathway of protein degradation. Conversion of the resulting N-terminal glutamine to glutamate renders the protein susceptible to arginylation, polyubiquitination and degradation as specified by the N-end rule. Does not act on substrates with internal or C-terminal glutamine and does not act on non-glutamine residues in any position. Does not deaminate acetylated N-terminal glutamine. With the exception of proline, all tested second-position residues on substrate peptides do not greatly influence the activity. In contrast, a proline at position 2, virtually abolishes deamidation of N-terminal glutamine. The sequence is that of Protein N-terminal glutamine amidohydrolase (Ntaq1) from Mus musculus (Mouse).